A 333-amino-acid chain; its full sequence is Putative F-box protein At4g11580 (333 aa).

Residues valine 11 to valine 58 form the F-box domain.

The chain is Putative F-box protein At4g11580 from Arabidopsis thaliana (Mouse-ear cress).